The sequence spans 364 residues: Phosphoserine aminotransferase (364 aa).

Position 46 (Arg-46) interacts with L-glutamate. Residues 80 to 81, Trp-106, Thr-157, Asp-176, and Gln-199 contribute to the pyridoxal 5'-phosphate site; that span reads AR. Residue Lys-200 is modified to N6-(pyridoxal phosphate)lysine. Residue 241-242 participates in pyridoxal 5'-phosphate binding; it reads NT.

The protein belongs to the class-V pyridoxal-phosphate-dependent aminotransferase family. SerC subfamily. In terms of assembly, homodimer. Pyridoxal 5'-phosphate is required as a cofactor.

It is found in the cytoplasm. It carries out the reaction O-phospho-L-serine + 2-oxoglutarate = 3-phosphooxypyruvate + L-glutamate. The enzyme catalyses 4-(phosphooxy)-L-threonine + 2-oxoglutarate = (R)-3-hydroxy-2-oxo-4-phosphooxybutanoate + L-glutamate. The protein operates within amino-acid biosynthesis; L-serine biosynthesis; L-serine from 3-phospho-D-glycerate: step 2/3. It participates in cofactor biosynthesis; pyridoxine 5'-phosphate biosynthesis; pyridoxine 5'-phosphate from D-erythrose 4-phosphate: step 3/5. Functionally, catalyzes the reversible conversion of 3-phosphohydroxypyruvate to phosphoserine and of 3-hydroxy-2-oxo-4-phosphonooxybutanoate to phosphohydroxythreonine. This Vibrio cholerae serotype O1 (strain ATCC 39315 / El Tor Inaba N16961) protein is Phosphoserine aminotransferase.